The following is a 426-amino-acid chain: Serine hydroxymethyltransferase 1 (426 aa).

Residues L118 and 122 to 124 (GHL) each bind (6S)-5,6,7,8-tetrahydrofolate. Position 227 is an N6-(pyridoxal phosphate)lysine (K227).

It belongs to the SHMT family. As to quaternary structure, homodimer. The cofactor is pyridoxal 5'-phosphate.

The protein resides in the cytoplasm. It carries out the reaction (6R)-5,10-methylene-5,6,7,8-tetrahydrofolate + glycine + H2O = (6S)-5,6,7,8-tetrahydrofolate + L-serine. It functions in the pathway one-carbon metabolism; tetrahydrofolate interconversion. The protein operates within amino-acid biosynthesis; glycine biosynthesis; glycine from L-serine: step 1/1. Its function is as follows. Catalyzes the reversible interconversion of serine and glycine with tetrahydrofolate (THF) serving as the one-carbon carrier. This reaction serves as the major source of one-carbon groups required for the biosynthesis of purines, thymidylate, methionine, and other important biomolecules. Also exhibits THF-independent aldolase activity toward beta-hydroxyamino acids, producing glycine and aldehydes, via a retro-aldol mechanism. The chain is Serine hydroxymethyltransferase 1 from Mycobacterium bovis (strain ATCC BAA-935 / AF2122/97).